The sequence spans 164 residues: ATP synthase subunit b (164 aa).

Residues glycine 6 to isoleucine 26 form a helical membrane-spanning segment.

The protein belongs to the ATPase B chain family. In terms of assembly, F-type ATPases have 2 components, F(1) - the catalytic core - and F(0) - the membrane proton channel. F(1) has five subunits: alpha(3), beta(3), gamma(1), delta(1), epsilon(1). F(0) has three main subunits: a(1), b(2) and c(10-14). The alpha and beta chains form an alternating ring which encloses part of the gamma chain. F(1) is attached to F(0) by a central stalk formed by the gamma and epsilon chains, while a peripheral stalk is formed by the delta and b chains.

It is found in the cell membrane. F(1)F(0) ATP synthase produces ATP from ADP in the presence of a proton or sodium gradient. F-type ATPases consist of two structural domains, F(1) containing the extramembraneous catalytic core and F(0) containing the membrane proton channel, linked together by a central stalk and a peripheral stalk. During catalysis, ATP synthesis in the catalytic domain of F(1) is coupled via a rotary mechanism of the central stalk subunits to proton translocation. In terms of biological role, component of the F(0) channel, it forms part of the peripheral stalk, linking F(1) to F(0). This chain is ATP synthase subunit b, found in Streptococcus pyogenes serotype M6 (strain ATCC BAA-946 / MGAS10394).